Here is a 270-residue protein sequence, read N- to C-terminus: Acyl-[acyl-carrier-protein]--UDP-N-acetylglucosamine O-acyltransferase (270 aa).

It belongs to the transferase hexapeptide repeat family. LpxA subfamily. As to quaternary structure, homotrimer.

Its subcellular location is the cytoplasm. It catalyses the reaction a (3R)-hydroxyacyl-[ACP] + UDP-N-acetyl-alpha-D-glucosamine = a UDP-3-O-[(3R)-3-hydroxyacyl]-N-acetyl-alpha-D-glucosamine + holo-[ACP]. Its pathway is glycolipid biosynthesis; lipid IV(A) biosynthesis; lipid IV(A) from (3R)-3-hydroxytetradecanoyl-[acyl-carrier-protein] and UDP-N-acetyl-alpha-D-glucosamine: step 1/6. Its function is as follows. Involved in the biosynthesis of lipid A, a phosphorylated glycolipid that anchors the lipopolysaccharide to the outer membrane of the cell. This chain is Acyl-[acyl-carrier-protein]--UDP-N-acetylglucosamine O-acyltransferase, found in Helicobacter pylori (strain Shi470).